Reading from the N-terminus, the 160-residue chain is 2-C-methyl-D-erythritol 2,4-cyclodiphosphate synthase (160 aa).

Positions 10 and 12 each coordinate a divalent metal cation. Residues 10 to 12 (DVH) and 36 to 37 (HS) each bind 4-CDP-2-C-methyl-D-erythritol 2-phosphate. Position 44 (His-44) interacts with a divalent metal cation. Residues 58–60 (DIG), 63–67 (FPDTD), 102–108 (AQAPKMA), 134–137 (TTTE), Phe-141, and Arg-144 each bind 4-CDP-2-C-methyl-D-erythritol 2-phosphate.

Belongs to the IspF family. Homotrimer. It depends on a divalent metal cation as a cofactor.

The catalysed reaction is 4-CDP-2-C-methyl-D-erythritol 2-phosphate = 2-C-methyl-D-erythritol 2,4-cyclic diphosphate + CMP. Its pathway is isoprenoid biosynthesis; isopentenyl diphosphate biosynthesis via DXP pathway; isopentenyl diphosphate from 1-deoxy-D-xylulose 5-phosphate: step 4/6. Its function is as follows. Involved in the biosynthesis of isopentenyl diphosphate (IPP) and dimethylallyl diphosphate (DMAPP), two major building blocks of isoprenoid compounds. Catalyzes the conversion of 4-diphosphocytidyl-2-C-methyl-D-erythritol 2-phosphate (CDP-ME2P) to 2-C-methyl-D-erythritol 2,4-cyclodiphosphate (ME-CPP) with a corresponding release of cytidine 5-monophosphate (CMP). The polypeptide is 2-C-methyl-D-erythritol 2,4-cyclodiphosphate synthase (Shewanella denitrificans (strain OS217 / ATCC BAA-1090 / DSM 15013)).